Consider the following 421-residue polypeptide: Glutamyl-tRNA reductase (421 aa).

Residues 49-52 (TCNR), Ser109, 114-116 (EPQ), and Gln120 contribute to the substrate site. The Nucleophile role is filled by Cys50. Position 189–194 (189–194 (GLGQIG)) interacts with NADP(+).

The protein belongs to the glutamyl-tRNA reductase family. Homodimer.

The enzyme catalyses (S)-4-amino-5-oxopentanoate + tRNA(Glu) + NADP(+) = L-glutamyl-tRNA(Glu) + NADPH + H(+). It participates in porphyrin-containing compound metabolism; protoporphyrin-IX biosynthesis; 5-aminolevulinate from L-glutamyl-tRNA(Glu): step 1/2. Catalyzes the NADPH-dependent reduction of glutamyl-tRNA(Glu) to glutamate 1-semialdehyde (GSA). The polypeptide is Glutamyl-tRNA reductase (Limosilactobacillus reuteri (strain DSM 20016) (Lactobacillus reuteri)).